We begin with the raw amino-acid sequence, 156 residues long: ATP synthase subunit b (156 aa).

A helical transmembrane segment spans residues 7-26 (LIGQAIWFALFIWITMKYVW).

It belongs to the ATPase B chain family. In terms of assembly, F-type ATPases have 2 components, F(1) - the catalytic core - and F(0) - the membrane proton channel. F(1) has five subunits: alpha(3), beta(3), gamma(1), delta(1), epsilon(1). F(0) has three main subunits: a(1), b(2) and c(10-14). The alpha and beta chains form an alternating ring which encloses part of the gamma chain. F(1) is attached to F(0) by a central stalk formed by the gamma and epsilon chains, while a peripheral stalk is formed by the delta and b chains.

It is found in the cell inner membrane. In terms of biological role, f(1)F(0) ATP synthase produces ATP from ADP in the presence of a proton or sodium gradient. F-type ATPases consist of two structural domains, F(1) containing the extramembraneous catalytic core and F(0) containing the membrane proton channel, linked together by a central stalk and a peripheral stalk. During catalysis, ATP synthesis in the catalytic domain of F(1) is coupled via a rotary mechanism of the central stalk subunits to proton translocation. Its function is as follows. Component of the F(0) channel, it forms part of the peripheral stalk, linking F(1) to F(0). In Dechloromonas aromatica (strain RCB), this protein is ATP synthase subunit b.